Consider the following 131-residue polypeptide: Profilin-5 (131 aa).

Cysteines 13 and 115 form a disulfide. Positions 81-97 match the Involved in PIP2 interaction motif; the sequence is AVIRGKKGAGGITIKKT. T111 carries the phosphothreonine modification.

It belongs to the profilin family. In terms of assembly, occurs in many kinds of cells as a complex with monomeric actin in a 1:1 ratio. Phosphorylated by MAP kinases.

The protein resides in the cytoplasm. It is found in the cytoskeleton. Functionally, binds to actin and affects the structure of the cytoskeleton. At high concentrations, profilin prevents the polymerization of actin, whereas it enhances it at low concentrations. In Olea europaea (Common olive), this protein is Profilin-5.